The primary structure comprises 366 residues: tRNA/tmRNA (uracil-C(5))-methyltransferase (366 aa).

S-adenosyl-L-methionine contacts are provided by Gln-190, Tyr-218, Asn-223, Glu-239, and Asp-299. The active-site Nucleophile is the Cys-324. Residue Glu-358 is the Proton acceptor of the active site.

It belongs to the class I-like SAM-binding methyltransferase superfamily. RNA M5U methyltransferase family. TrmA subfamily.

It catalyses the reaction uridine(54) in tRNA + S-adenosyl-L-methionine = 5-methyluridine(54) in tRNA + S-adenosyl-L-homocysteine + H(+). It carries out the reaction uridine(341) in tmRNA + S-adenosyl-L-methionine = 5-methyluridine(341) in tmRNA + S-adenosyl-L-homocysteine + H(+). Its function is as follows. Dual-specificity methyltransferase that catalyzes the formation of 5-methyluridine at position 54 (m5U54) in all tRNAs, and that of position 341 (m5U341) in tmRNA (transfer-mRNA). In Salmonella arizonae (strain ATCC BAA-731 / CDC346-86 / RSK2980), this protein is tRNA/tmRNA (uracil-C(5))-methyltransferase.